Consider the following 861-residue polypeptide: Linoleate 9S-lipoxygenase 2 (861 aa).

In terms of domain architecture, PLAT spans N29–V160. The region spanning P163–I861 is the Lipoxygenase domain. The interval E212–S246 is disordered. Fe cation is bound by residues H522, H527, H713, N717, and I861.

This sequence belongs to the lipoxygenase family. As to quaternary structure, monomer. The cofactor is Fe cation. As to expression, highly expressed in tubers and roots. Detected in flower buds and leaves.

Its subcellular location is the cytoplasm. It carries out the reaction (9Z,12Z)-octadecadienoate + O2 = (9S)-hydroperoxy-(10E,12Z)-octadecadienoate. Its pathway is lipid metabolism; oxylipin biosynthesis. In terms of biological role, plant lipoxygenases may be involved in a number of diverse aspects of plant physiology including growth and development, pest resistance, and senescence or responses to wounding. Catalyzes the hydroperoxidation of lipids containing a cis,cis-1,4-pentadiene structure. Linoleic acid is the preferred substrate, but is also active with linolenic and arachidonic acids. The polypeptide is Linoleate 9S-lipoxygenase 2 (LOX1.2) (Solanum tuberosum (Potato)).